Consider the following 107-residue polypeptide: BolA-like protein 3 (107 aa).

It belongs to the BolA/IbaG family. Interacts with NFU1. As to expression, widely expressed.

It localises to the mitochondrion. Its function is as follows. Acts as a mitochondrial iron-sulfur (Fe-S) cluster assembly factor that facilitates (Fe-S) cluster insertion into a subset of mitochondrial proteins. Probably acts together with NFU1. The sequence is that of BolA-like protein 3 from Homo sapiens (Human).